The primary structure comprises 131 residues: Small ribosomal subunit protein uS8 (131 aa).

Belongs to the universal ribosomal protein uS8 family. In terms of assembly, part of the 30S ribosomal subunit. Contacts proteins S5 and S12.

Functionally, one of the primary rRNA binding proteins, it binds directly to 16S rRNA central domain where it helps coordinate assembly of the platform of the 30S subunit. This chain is Small ribosomal subunit protein uS8, found in Rhizorhabdus wittichii (strain DSM 6014 / CCUG 31198 / JCM 15750 / NBRC 105917 / EY 4224 / RW1) (Sphingomonas wittichii).